Consider the following 753-residue polypeptide: 5-methyltetrahydropteroyltriglutamate--homocysteine methyltransferase (753 aa).

5-methyltetrahydropteroyltri-L-glutamate-binding positions include 17–20 (RELK) and K117. L-homocysteine-binding positions include 431–433 (IGS) and E484. L-methionine-binding positions include 431-433 (IGS) and E484. Residues 515-516 (RC) and W561 each bind 5-methyltetrahydropteroyltri-L-glutamate. An L-homocysteine-binding site is contributed by D599. D599 is a binding site for L-methionine. Residue E605 coordinates 5-methyltetrahydropteroyltri-L-glutamate. 3 residues coordinate Zn(2+): H641, C643, and E665. H694 (proton donor) is an active-site residue. Residue C726 coordinates Zn(2+).

The protein belongs to the vitamin-B12 independent methionine synthase family. Requires Zn(2+) as cofactor.

It carries out the reaction 5-methyltetrahydropteroyltri-L-glutamate + L-homocysteine = tetrahydropteroyltri-L-glutamate + L-methionine. The protein operates within amino-acid biosynthesis; L-methionine biosynthesis via de novo pathway; L-methionine from L-homocysteine (MetE route): step 1/1. In terms of biological role, catalyzes the transfer of a methyl group from 5-methyltetrahydrofolate to homocysteine resulting in methionine formation. The sequence is that of 5-methyltetrahydropteroyltriglutamate--homocysteine methyltransferase from Shigella boydii serotype 4 (strain Sb227).